The sequence spans 108 residues: Acid stress chaperone HdeB (108 aa).

The first 29 residues, 1–29, serve as a signal peptide directing secretion; that stretch reads MNISSLRKAFIFMGAVAALSLVNAQSALA. Position 93 is an N6-acetyllysine (Lys93).

It belongs to the HdeB family.

The protein localises to the periplasm. Required for optimal acid stress protection, which is important for survival of enteric bacteria in the acidic environment of the host stomach. Exhibits a chaperone-like activity at acidic pH by preventing the aggregation of many different periplasmic proteins. This is Acid stress chaperone HdeB from Escherichia coli O6:H1 (strain CFT073 / ATCC 700928 / UPEC).